The sequence spans 326 residues: Undecaprenyl-phosphate 4-deoxy-4-formamido-L-arabinose transferase (326 aa).

2 helical membrane passes run 235 to 255 (MLSV…LLLI) and 270 to 290 (VFML…GMGL).

This sequence belongs to the glycosyltransferase 2 family.

Its subcellular location is the cell inner membrane. It catalyses the reaction UDP-4-deoxy-4-formamido-beta-L-arabinose + di-trans,octa-cis-undecaprenyl phosphate = 4-deoxy-4-formamido-alpha-L-arabinopyranosyl di-trans,octa-cis-undecaprenyl phosphate + UDP. It functions in the pathway glycolipid biosynthesis; 4-amino-4-deoxy-alpha-L-arabinose undecaprenyl phosphate biosynthesis; 4-amino-4-deoxy-alpha-L-arabinose undecaprenyl phosphate from UDP-4-deoxy-4-formamido-beta-L-arabinose and undecaprenyl phosphate: step 1/2. Its pathway is bacterial outer membrane biogenesis; lipopolysaccharide biosynthesis. Functionally, catalyzes the transfer of 4-deoxy-4-formamido-L-arabinose from UDP to undecaprenyl phosphate. The modified arabinose is attached to lipid A and is required for resistance to polymyxin and cationic antimicrobial peptides. This chain is Undecaprenyl-phosphate 4-deoxy-4-formamido-L-arabinose transferase, found in Sodalis glossinidius (strain morsitans).